The following is a 92-amino-acid chain: DNA-directed RNA polymerase subunit Rpo11 (92 aa).

The protein belongs to the archaeal Rpo11/eukaryotic RPB11/RPC19 RNA polymerase subunit family. Part of the RNA polymerase complex.

The protein resides in the cytoplasm. The catalysed reaction is RNA(n) + a ribonucleoside 5'-triphosphate = RNA(n+1) + diphosphate. DNA-dependent RNA polymerase (RNAP) catalyzes the transcription of DNA into RNA using the four ribonucleoside triphosphates as substrates. The sequence is that of DNA-directed RNA polymerase subunit Rpo11 from Halorubrum lacusprofundi (strain ATCC 49239 / DSM 5036 / JCM 8891 / ACAM 34).